A 678-amino-acid polypeptide reads, in one-letter code: Electrogenic aspartate/glutamate antiporter SLC25A12, mitochondrial (678 aa).

At Ala-2 the chain carries N-acetylalanine. Residues 2-294 form a regulatory N-terminal domain region; that stretch reads AVKVQTTKRG…TLADIERIAP (293 aa). Residues 2 to 329 are Mitochondrial intermembrane-facing; it reads AVKVQTTKRG…WLQIAESAYR (328 aa). 5 residues coordinate Ca(2+): Asp-65, Thr-67, Asp-69, Leu-71, and Glu-76. EF-hand domains lie at 65 to 76, 86 to 121, 125 to 155, and 157 to 192; these read DQTKDGLISYQE, APDSMFIVAFQLFDKSGNGEVTFENVKEIFGQTIIH, PFNWDCEFIRLHFGHNRKKHLNYTEFTQFLQ, and LQLEHARQAFALKDKSKSGMISGLDFSDIMVTIRSH. The interval 295–310 is linker loop domain; that stretch reads LAEGALPYNLAELQRQ. The segment at 320–612 is carrier domain; the sequence is WLQIAESAYR…RWFYIDFGGL (293 aa). 3 Solcar repeats span residues 324-416, 424-508, and 516-604; these read AESA…VRDK, VPLP…CKLL, and VGGL…LQRW. A helical membrane pass occupies residues 330 to 347; that stretch reads FTLGSVAGAVGATAVYPI. Residues 348–390 are Mitochondrial matrix-facing; the sequence is DLVKTRMQNQRGSGSVVGELMYKNSFDCFKKVLRYEGFFGLYR. A helical transmembrane segment spans residues 391 to 410; that stretch reads GLIPQLIGVAPEKAIKLTVN. Residues 411-433 are Mitochondrial intermembrane-facing; that stretch reads DFVRDKFTRRDGSVPLPAEVLAG. A helical membrane pass occupies residues 434–447; sequence GCAGGSQVIFTNPL. Topologically, residues 448-482 are mitochondrial matrix; it reads EIVKIRLQVAGEITTGPRVSALNVLRDLGIFGLYK. The helical transmembrane segment at 483 to 502 threads the bilayer; sequence GAKACFLRDIPFSAIYFPVY. At 503 to 521 the chain is on the mitochondrial intermembrane side; the sequence is AHCKLLLADENGHVGGLNL. Residues 522–539 form a helical membrane-spanning segment; sequence LAAGAMAGVPAASLVTPA. Residues 540-578 lie on the Mitochondrial matrix side of the membrane; the sequence is DVIKTRLQVAARAGQTTYSGVIDCFRKILREEGPSAFWK. Residues 579–598 traverse the membrane as a helical segment; sequence GTAARVFRSSPQFGVTLVTY. Residues 599–678 lie on the Mitochondrial intermembrane side of the membrane; the sequence is ELLQRWFYID…QPKAAVAATQ (80 aa). A C-terminal domain region spans residues 613–675; it reads KPAGSEPTPK…AVVQPKAAVA (63 aa).

It belongs to the mitochondrial carrier (TC 2.A.29) family. As to quaternary structure, homodimer (via N-terminus). As to expression, expressed predominantly in the heart and skeletal muscle, weakly in brain and kidney.

The protein resides in the mitochondrion inner membrane. The enzyme catalyses L-aspartate(in) + L-glutamate(out) + H(+)(out) = L-aspartate(out) + L-glutamate(in) + H(+)(in). The catalysed reaction is 3-sulfino-L-alanine(out) + L-glutamate(in) + H(+)(in) = 3-sulfino-L-alanine(in) + L-glutamate(out) + H(+)(out). It catalyses the reaction 3-sulfino-L-alanine(out) + L-aspartate(in) = 3-sulfino-L-alanine(in) + L-aspartate(out). Activated by calcium-binding in the mitochondrial intermembrane space. Inhibited by pyridoxal 5'-phosphate, bathophenathroline, mercurials, diethyl pyrocarbonate and N-ethylmaleimide. Functionally, mitochondrial electrogenic aspartate/glutamate antiporter that favors efflux of aspartate and entry of glutamate and proton within the mitochondria as part of the malate-aspartate shuttle. Also mediates the uptake of L-cysteinesulfinate (3-sulfino-L-alanine) by mitochondria in exchange of L-glutamate and proton. Can also exchange L-cysteinesulfinate with aspartate in their anionic form without any proton translocation. Lacks transport activity towards L-glutamine or gamma-aminobutyric acid (GABA). In Homo sapiens (Human), this protein is Electrogenic aspartate/glutamate antiporter SLC25A12, mitochondrial.